The chain runs to 341 residues: Aspartate carbamoyltransferase catalytic subunit (341 aa).

Residues Arg-74 and Thr-75 each coordinate carbamoyl phosphate. Lys-102 contributes to the L-aspartate binding site. Carbamoyl phosphate contacts are provided by Arg-124, His-152, and Gln-155. L-aspartate contacts are provided by Arg-190 and Arg-244. Positions 285 and 286 each coordinate carbamoyl phosphate.

Belongs to the aspartate/ornithine carbamoyltransferase superfamily. ATCase family. In terms of assembly, heterododecamer (2C3:3R2) of six catalytic PyrB chains organized as two trimers (C3), and six regulatory PyrI chains organized as three dimers (R2).

The enzyme catalyses carbamoyl phosphate + L-aspartate = N-carbamoyl-L-aspartate + phosphate + H(+). The protein operates within pyrimidine metabolism; UMP biosynthesis via de novo pathway; (S)-dihydroorotate from bicarbonate: step 2/3. In terms of biological role, catalyzes the condensation of carbamoyl phosphate and aspartate to form carbamoyl aspartate and inorganic phosphate, the committed step in the de novo pyrimidine nucleotide biosynthesis pathway. This is Aspartate carbamoyltransferase catalytic subunit from Novosphingobium aromaticivorans (strain ATCC 700278 / DSM 12444 / CCUG 56034 / CIP 105152 / NBRC 16084 / F199).